The primary structure comprises 86 residues: MKTLLLTLVVVTIVCLDLGYTLTCVTTKSIGGVTTEDCPAGQNVCFKRWHYVTPKNYDIIKGCAATCPKVDNNDPIRCCGTDKCND.

The N-terminal stretch at 1 to 21 is a signal peptide; it reads MKTLLLTLVVVTIVCLDLGYT. Cystine bridges form between Cys-24-Cys-45, Cys-38-Cys-63, Cys-67-Cys-78, and Cys-79-Cys-84.

It belongs to the three-finger toxin family. Short-chain subfamily. Aminergic toxin sub-subfamily. As to quaternary structure, monomer. As to expression, expressed by the venom gland.

It is found in the secreted. Binds irreversibly to M1 (CHRM1) muscarinic acetylcholine receptors, and reveals a slightly weaker effect on M3 (CHRM3) receptors. The mechanism of toxin-receptor interaction comprises at least two steps. The first step is fast with no competition between the toxin and the antagonist. The second step is slow with formation of a more stable toxin-receptor complex and inhibition of the antagonist binding. This chain is Muscarinic toxin 2, found in Dendroaspis angusticeps (Eastern green mamba).